The sequence spans 215 residues: MGDYDSDDEKSQVEKLRHAKVPRGMFVSGWDDDADELIEEDKNPQSSIERMILWAVNENRISEVREILKLDADTVNAKDNDGYTPLHRAAYNNFVDMAKLLLQYHANPNARTELGWTPLHSACKWNNADCAHLLLQFGADVNAESDGKQTPLHITATVSNCRNTATVLLLDRYIQPRKENNSEELASVIARRTGMSFPIFESGEEAYDCETGLID.

ANK repeat units lie at residues 81-110 (DGYT…NPNA) and 114-143 (LGWT…DVNA).

In terms of assembly, interacts with Bdbt; interaction promotes the stability of both complex members.

The protein localises to the cytoplasm. Its subcellular location is the cytosol. The protein resides in the cell membrane. In terms of biological role, required for regulating the establishment of planar cell polarity in the wing. Forms a complex with Bdbt which likely functions in the regulation of planar polarity by promoting the activity of Dco during planar polarity establishment. Within the complex, probably functions to stabilize Bdbt, while Bdbt directly promotes Dco activity in regulating phosphorylation of core proteins such as dsh, and asymmetric localization. The sequence is that of Ankyrin repeat domain-containing protein 49 from Drosophila melanogaster (Fruit fly).